A 422-amino-acid chain; its full sequence is MLLIKNGRVMDPKSGLDQVCDVLVQDGKIIKIASEITEEGAETIDATGLVVAPGLVDIHVHFREPGQTHKEDIHTGALAAAAGGFTTVVMMANTSPTISDVETLQAVLQSAAKEKINVKTVATITKNFNGKNLTDFKALLEAGAVGFSDDGIPLESSKIVKEAMEEAKKLNTFISLHEEDPGLNGVLGFNENIAREHFHICGATGVAEYAMMARDVMIAYATKAHVHIQHLSKEESVKVVEFAQGLGAEVTAEVAPQHFSKTEALLLTQGSNAKMNPPLRLESDRRAVIEGLKSGVITVIATDHAPHHVDEKNVEDITKAPSGMTGLETSLSLSLTYLVEAGELSLMELLEKMTYNPAKLYNFEAGYLAENGPADITIFDAKADRFVDSHFASKAANSPFIGETLKGQVKYTICKGQIVYQA.

His-59 and His-61 together coordinate Zn(2+). Substrate contacts are provided by residues 61–63 (HFR) and Asn-93. Residues Asp-150, His-177, and His-230 each coordinate Zn(2+). Asn-276 serves as a coordination point for substrate. Asp-303 provides a ligand contact to Zn(2+). Asp-303 is an active-site residue. Residue His-307 coordinates substrate.

The protein belongs to the metallo-dependent hydrolases superfamily. DHOase family. Class I DHOase subfamily. Requires Zn(2+) as cofactor.

The catalysed reaction is (S)-dihydroorotate + H2O = N-carbamoyl-L-aspartate + H(+). Its pathway is pyrimidine metabolism; UMP biosynthesis via de novo pathway; (S)-dihydroorotate from bicarbonate: step 3/3. In terms of biological role, catalyzes the reversible cyclization of carbamoyl aspartate to dihydroorotate. In Streptococcus pneumoniae serotype 4 (strain ATCC BAA-334 / TIGR4), this protein is Dihydroorotase.